Consider the following 251-residue polypeptide: Hydroxyacylglutathione hydrolase (251 aa).

Residues histidine 53, histidine 55, aspartate 57, histidine 58, histidine 110, aspartate 127, and histidine 165 each contribute to the Zn(2+) site.

The protein belongs to the metallo-beta-lactamase superfamily. Glyoxalase II family. As to quaternary structure, monomer. Zn(2+) serves as cofactor.

It catalyses the reaction an S-(2-hydroxyacyl)glutathione + H2O = a 2-hydroxy carboxylate + glutathione + H(+). It participates in secondary metabolite metabolism; methylglyoxal degradation; (R)-lactate from methylglyoxal: step 2/2. Its function is as follows. Thiolesterase that catalyzes the hydrolysis of S-D-lactoyl-glutathione to form glutathione and D-lactic acid. The polypeptide is Hydroxyacylglutathione hydrolase (Escherichia coli (strain UTI89 / UPEC)).